A 429-amino-acid chain; its full sequence is Aspartate--tRNA(Asp/Asn) ligase (429 aa).

Glutamate 166 contributes to the L-aspartate binding site. An aspartate region spans residues 188–191 (QLYK). Residue arginine 210 coordinates L-aspartate. Residues 210 to 212 (RAE), 218 to 220 (RHL), and glutamate 352 each bind ATP. Mg(2+)-binding residues include glutamate 352 and serine 355. 2 residues coordinate L-aspartate: serine 355 and arginine 359. 400–403 (GIER) is an ATP binding site.

This sequence belongs to the class-II aminoacyl-tRNA synthetase family. Type 2 subfamily. Homodimer. It depends on Mg(2+) as a cofactor.

Its subcellular location is the cytoplasm. It catalyses the reaction tRNA(Asx) + L-aspartate + ATP = L-aspartyl-tRNA(Asx) + AMP + diphosphate. Functionally, aspartyl-tRNA synthetase with relaxed tRNA specificity since it is able to aspartylate not only its cognate tRNA(Asp) but also tRNA(Asn). Reaction proceeds in two steps: L-aspartate is first activated by ATP to form Asp-AMP and then transferred to the acceptor end of tRNA(Asp/Asn). This Methanoculleus marisnigri (strain ATCC 35101 / DSM 1498 / JR1) protein is Aspartate--tRNA(Asp/Asn) ligase.